Consider the following 1093-residue polypeptide: MVVPGPLALSLLLSSLTLLVSHLSSSQDIASESSSEQQMCTRREHPIVAFEDLKPWVFNFTYPGVRDFSQLALDPSRNQLIVGARNYLFRLSLANVSLLQATEWASSEDTRRSCQSKGKTEEECQNYVRVLIVSGRKVFMCGTNAFSPVCSSRQVGNLSRTIEKINGVARCPYDPRHNSTAVISSQGELYAATVIDFSGRDPAIYRSLGSGPPLRTAQYNSKWLNEPNFVAAFDIGLFAYFFLRENAVEHDCGRTVYSRVARVCKNDVGGRFLLEDTWTTFMKARLNCSRPGEVPFYYNELQSAFHLPEQDLIYGVFTTNVNSIAASAVCAFNLSAISKAFNGPFRYQENPRAAWLPIANPIPNFQCGTLPETGPNENLTERSLQDAQRLFLMSEAVQPVTPEPCVTQDSVRFSHLVVDLVQAKDTLYHVLYIGTESGTILKALSTASRSLRGCYLEELHVLPPGRLEPLRSLRILHSARALFVGLSDRVLRVPLERCSAYHSQGACLGARDPYCGWDGKRQLCSTLEDSSNMSLWIQNITTCPVRNVTRDGGFGPWSPWKPCEHLDGDNSGSCLCRARSCDSPRPRCGGLECLGPSIHIANCSRNGAWTAWSSWAQCSTSCGIGFQVRQRSCSNPAPRHGGRICVGKSREERFCNENTPCPVPIFWASWGSWSKCSNNCGGGVQSRRRSCENGNSCPGCGVEFKTCNPEACPEVRRNTPWTPWLPVNVTQGGARQEQRFRFTCRAPLPDPHGLQFGKRRTETRTCPADGTGACDTDALVEDLLRSGSTSPHTLNGGWATWGPWSSCSRDCELGFRVRKRTCTNPEPRNGGLPCVGDAAEYQDCNPQACPVRGAWSCWTAWSQCSASCGGGHYQRTRSCTSPAPSPGEDICLGLHTEEALCSTQACPEGWSLWSEWGVCTEDGAQSRSRSCEELLPGPGACVGNSSQSRPCPYSEIPVILPASSVEETTSCGGFNLIHLIVTGVSCFLVSGLLTLAVYLSCQHCQRQSQESTLVHPATPNHLHYKGGGTPKNEKYTPMEFKTLNKNNLIPDDRANFYPLQQTNVYTTTYYPSPLNKPSFRPEASPGQRCFPNS.

Positions 1-19 (MVVPGPLALSLLLSSLTLL) are cleaved as a signal peptide. The Extracellular segment spans residues 20 to 978 (VSHLSSSQDI…TSCGGFNLIH (959 aa)). The Sema domain occupies 45–495 (HPIVAFEDLK…LSDRVLRVPL (451 aa)). 2 N-linked (GlcNAc...) asparagine glycosylation sites follow: asparagine 59 and asparagine 95. Intrachain disulfides connect cysteine 114–cysteine 124 and cysteine 141–cysteine 150. Residues asparagine 157, asparagine 178, and asparagine 287 are each glycosylated (N-linked (GlcNAc...) asparagine). Cystine bridges form between cysteine 264–cysteine 367 and cysteine 288–cysteine 330. Residues asparagine 333, asparagine 378, asparagine 532, asparagine 539, asparagine 547, and asparagine 602 are each glycosylated (N-linked (GlcNAc...) asparagine). 7 consecutive TSP type-1 domains span residues 551-605 (DGGF…NCSR), 606-662 (NGAW…TPCP), 664-713 (PIFW…EACP), 721-776 (WTPW…ACDT), 795-850 (NGGW…QACP), 852-907 (RGAW…QACP), and 908-952 (EGWS…RPCP). Intrachain disulfides connect cysteine 618-cysteine 655, cysteine 622-cysteine 661, cysteine 633-cysteine 645, cysteine 676-cysteine 707, cysteine 680-cysteine 712, and cysteine 691-cysteine 697. A glycan (N-linked (GlcNAc...) asparagine) is linked at asparagine 728. Disulfide bonds link cysteine 807–cysteine 844, cysteine 811–cysteine 849, cysteine 822–cysteine 834, cysteine 864–cysteine 901, cysteine 868–cysteine 906, and cysteine 879–cysteine 891. N-linked (GlcNAc...) asparagine glycosylation occurs at asparagine 944. The helical transmembrane segment at 979 to 999 (LIVTGVSCFLVSGLLTLAVYL) threads the bilayer. Residues 1000–1093 (SCQHCQRQSQ…SPGQRCFPNS (94 aa)) are Cytoplasmic-facing.

This sequence belongs to the semaphorin family. In adult, only detected in brain.

It localises to the membrane. May act as a positive axonal guidance cue. The chain is Semaphorin-5B (Sema5b) from Mus musculus (Mouse).